Reading from the N-terminus, the 1137-residue chain is Phytochrome C (1137 aa).

Residues 1–18 (MSSSRSNNRATCSRSSSA) are compositionally biased toward low complexity. A disordered region spans residues 1 to 27 (MSSSRSNNRATCSRSSSARSKHSARVV). Positions 217–400 (NLSLLCDVLV…VFGIQINKEV (184 aa)) constitute a GAF domain. Phytochromobilin is bound at residue cysteine 322. PAS domains follow at residues 620–690 (VTNE…LQGI) and 750–824 (IQGD…TKLS). In terms of domain architecture, Histidine kinase spans 904–1124 (YIRQELRNPL…IVLVEFPVAQ (221 aa)).

This sequence belongs to the phytochrome family. Homodimer. Post-translationally, contains one covalently linked phytochromobilin chromophore.

Regulatory photoreceptor which exists in two forms that are reversibly interconvertible by light: the Pr form that absorbs maximally in the red region of the spectrum and the Pfr form that absorbs maximally in the far-red region. Photoconversion of Pr to Pfr induces an array of morphogenic responses, whereas reconversion of Pfr to Pr cancels the induction of those responses. Pfr controls the expression of a number of nuclear genes including those encoding the small subunit of ribulose-bisphosphate carboxylase, chlorophyll A/B binding protein, protochlorophyllide reductase, rRNA, etc. It also controls the expression of its own gene(s) in a negative feedback fashion. The protein is Phytochrome C (PHYC) of Oryza sativa subsp. japonica (Rice).